Consider the following 454-residue polypeptide: tRNA(Ile)-lysidine synthase (454 aa).

27–32 lines the ATP pocket; that stretch reads SGGSDS.

This sequence belongs to the tRNA(Ile)-lysidine synthase family.

The protein localises to the cytoplasm. The catalysed reaction is cytidine(34) in tRNA(Ile2) + L-lysine + ATP = lysidine(34) in tRNA(Ile2) + AMP + diphosphate + H(+). Ligates lysine onto the cytidine present at position 34 of the AUA codon-specific tRNA(Ile) that contains the anticodon CAU, in an ATP-dependent manner. Cytidine is converted to lysidine, thus changing the amino acid specificity of the tRNA from methionine to isoleucine. In Mesorhizobium japonicum (strain LMG 29417 / CECT 9101 / MAFF 303099) (Mesorhizobium loti (strain MAFF 303099)), this protein is tRNA(Ile)-lysidine synthase.